The sequence spans 336 residues: Glycerol-3-phosphate dehydrogenase [NAD(P)+] (336 aa).

Trp-16 and Lys-109 together coordinate NADPH. Sn-glycerol 3-phosphate-binding residues include Lys-109, Gly-137, and Ser-139. Ala-141 provides a ligand contact to NADPH. The sn-glycerol 3-phosphate site is built by Lys-192, Asp-245, Ser-255, Arg-256, and Asn-257. The Proton acceptor role is filled by Lys-192. Position 256 (Arg-256) interacts with NADPH. NADPH-binding residues include Val-280 and Glu-282.

The protein belongs to the NAD-dependent glycerol-3-phosphate dehydrogenase family.

It is found in the cytoplasm. It catalyses the reaction sn-glycerol 3-phosphate + NAD(+) = dihydroxyacetone phosphate + NADH + H(+). It carries out the reaction sn-glycerol 3-phosphate + NADP(+) = dihydroxyacetone phosphate + NADPH + H(+). It functions in the pathway membrane lipid metabolism; glycerophospholipid metabolism. Its function is as follows. Catalyzes the reduction of the glycolytic intermediate dihydroxyacetone phosphate (DHAP) to sn-glycerol 3-phosphate (G3P), the key precursor for phospholipid synthesis. This chain is Glycerol-3-phosphate dehydrogenase [NAD(P)+], found in Hyphomonas neptunium (strain ATCC 15444).